Reading from the N-terminus, the 425-residue chain is MEVKELERDKNRVVLEYVFNREEVLEAEDKAARYLNQRVEIPGFRKGRVPKNILKMRLGEDFQEYTLDFLMDLIPDTLKDRNLIMSPVVTEREIKEDTARFVVEVHEEPEVKIGDVSKIEVEKVDEEKVLEKYVERRLEDLREKHALLEPKEGPAEVGDLVRISMEVYNEEGKNLTTREYEYVIKEGEDRPFVKDLIGKKKDDVVEIEREYEGKKYTYRLKVQEVYRRTLPEIGDELARTVNNEFETLEQLKEELKKEGKDIYDVEMKESMREQLLEKLPEVVEIEISERTLDLLVQETINRLKREGRYDQIVSSYESEEKLKEELKKRILDDIKRDRAIEVIAKERNVDVSDEELEKEAEELAPFWGISPERAKSLVKSRRDLREDLRWAILKRKVLDLLLEEVTVKVVEPRGEGDGDERKGDN.

Positions 158-231 (GDLVRISMEV…VQEVYRRTLP (74 aa)) constitute a PPIase FKBP-type domain.

It belongs to the FKBP-type PPIase family. Tig subfamily.

It is found in the cytoplasm. The catalysed reaction is [protein]-peptidylproline (omega=180) = [protein]-peptidylproline (omega=0). Involved in protein export. Acts as a chaperone by maintaining the newly synthesized protein in an open conformation. Functions as a peptidyl-prolyl cis-trans isomerase. The sequence is that of Trigger factor from Thermotoga neapolitana (strain ATCC 49049 / DSM 4359 / NBRC 107923 / NS-E).